A 154-amino-acid polypeptide reads, in one-letter code: Proline dehydrogenase transcriptional activator (154 aa).

An HTH asnC-type domain is found at 5-66; that stretch reads IDATDRRILH…MLSPIRLGLI (62 aa). Positions 24–43 form a DNA-binding region, H-T-H motif; it reads VTELARKVGLSKTPVAARIR.

In terms of biological role, transcriptional activator of the putA gene in response to proline. The sequence is that of Proline dehydrogenase transcriptional activator (putR) from Rhodobacter capsulatus (Rhodopseudomonas capsulata).